Here is an 821-residue protein sequence, read N- to C-terminus: Ent-pimara-8(14),15-diene synthase (821 aa).

5 residues coordinate Mg(2+): Asp-556, Asp-560, Asn-701, Thr-705, and Glu-709. The DDXXD motif signature appears at 556 to 560 (DDFFD).

This sequence belongs to the terpene synthase family. Requires Mg(2+) as cofactor. Highly expressed in roots, at intermediate levels in stems and at lower levels in leaves.

The catalysed reaction is ent-copalyl diphosphate = ent-pimara-8(14),15-diene + diphosphate. It participates in secondary metabolite biosynthesis; terpenoid biosynthesis. Its function is as follows. Involved in the biosynthesis of ent-kaurene diterpenoids natural products. Catalyzes the conversion of ent-copalyl diphosphate to ent-pimara-8(14),15-diene. This Oryza sativa subsp. japonica (Rice) protein is Ent-pimara-8(14),15-diene synthase.